The chain runs to 161 residues: MSSSEVDKVFTEEQEALVVKSWAVMKKNSAELGLKFFLKIFEIAPSAKNLFSYLKDSPIPLEQNPKLKPHAMTVFVMTCESAVQLRKAGKVTVRESNLKRLGAIHFKNGVVNEHFETRFALLETIKEAVPEMWSPEMKNAWGEAYDQLVAAIKSEMKPSST.

In terms of domain architecture, Globin spans valine 9 to lysine 157. The Homodimerization motif lies at glutamate 42–serine 46. Serine 52, lysine 66, histidine 70, arginine 100, and histidine 105 together coordinate heme b. A Homodimerization motif is present at residues asparagine 112–glutamate 123.

This sequence belongs to the plant globin family. As to quaternary structure, homodimer. Requires heme b as cofactor. Root specific.

Its subcellular location is the cytoplasm. It is found in the nucleus. The enzyme catalyses Fe(III)-heme b-[protein] + nitric oxide + H2O = Fe(II)-heme b-[protein] + nitrite + 2 H(+). Phytoglobin that reduces nitrite to nitric oxide (NO) under anoxic conditions (e.g. during flooding or in waterlogged soil) and upon root nodulation. Required for general plant development and during nodulation, especially for the onset of symbiosis. Monitors nitric oxide (NO) levels during early phase of the nitrogen-fixing symbiosis and buffers oxygen in functioning nodules. May not function as an oxygen storage or transport protein. Has an unusually high affinity for O(2) through a hexacoordinate heme iron because of a very low dissociation constant. The chain is Anaerobic nitrite reductase GLB1 (GLB1) from Trema tomentosum (Peach-leaf poison-bush).